Consider the following 224-residue polypeptide: MAKNKFNKSWLQDHLTDPYVKMAQKEGYRARAVYKLSEIDEQDHLIKAGMTIVDLGSAPGSWSQYVRNRLTELGKSNPKIESGKPDGQIIAIDILPMEDIADVSFIQGDFREEEGLAALEALLPKSAEGKVDLVLSDMAPNLSGVGVADSARMAFLAEIALDFATAHLKPEGALLIKCFNGSGYSQIVESFKKVFKTVASRKPKASRAKSSEIFLLGKNLKPPK.

S-adenosyl-L-methionine-binding residues include G60, W62, D93, D109, and D137. Residue K177 is the Proton acceptor of the active site.

Belongs to the class I-like SAM-binding methyltransferase superfamily. RNA methyltransferase RlmE family.

Its subcellular location is the cytoplasm. It catalyses the reaction uridine(2552) in 23S rRNA + S-adenosyl-L-methionine = 2'-O-methyluridine(2552) in 23S rRNA + S-adenosyl-L-homocysteine + H(+). Its function is as follows. Specifically methylates the uridine in position 2552 of 23S rRNA at the 2'-O position of the ribose in the fully assembled 50S ribosomal subunit. This Polynucleobacter asymbioticus (strain DSM 18221 / CIP 109841 / QLW-P1DMWA-1) (Polynucleobacter necessarius subsp. asymbioticus) protein is Ribosomal RNA large subunit methyltransferase E.